Here is a 759-residue protein sequence, read N- to C-terminus: Arylphorin subunit A4 (759 aa).

The signal sequence occupies residues 1–16 (MKIAIVLLAIIALVAA).

This sequence belongs to the hemocyanin family. In terms of assembly, heterohexamer. As to expression, fat body.

It localises to the secreted. It is found in the extracellular space. Functionally, arylphorin is a larval storage protein (LSP) which may serve as a storage protein used primarily as a source of aromatic amino acids for protein synthesis during metamorphosis. It is a constituent of the sclerotizing system of the cuticle, and serves as a carrier for ecdysteroid hormone. The polypeptide is Arylphorin subunit A4 (Calliphora vicina (Blue blowfly)).